The chain runs to 663 residues: UvrABC system protein B (663 aa).

Positions 1–10 (MIDKRDDKPF) are enriched in basic and acidic residues. Residues 1 to 23 (MIDKRDDKPFKLKSKYKPSGDQP) form a disordered region. In terms of domain architecture, Helicase ATP-binding spans 31–418 (DNIEGGEKAQ…TNTIIEQIIR (388 aa)). Residue 44–51 (GATGTGKT) participates in ATP binding. The short motif at 97–120 (YYDYYQPEAYVPSSDTYIEKDSSV) is the Beta-hairpin element. Residues 435 to 601 (QMDDLLGEIN…TIKKDIRGLI (167 aa)) enclose the Helicase C-terminal domain. One can recognise a UVR domain in the interval 627 to 662 (KEAINALQKQMQEAAELLDFELAAQMRDLILELKLM).

This sequence belongs to the UvrB family. In terms of assembly, forms a heterotetramer with UvrA during the search for lesions. Interacts with UvrC in an incision complex.

It is found in the cytoplasm. Its function is as follows. The UvrABC repair system catalyzes the recognition and processing of DNA lesions. A damage recognition complex composed of 2 UvrA and 2 UvrB subunits scans DNA for abnormalities. Upon binding of the UvrA(2)B(2) complex to a putative damaged site, the DNA wraps around one UvrB monomer. DNA wrap is dependent on ATP binding by UvrB and probably causes local melting of the DNA helix, facilitating insertion of UvrB beta-hairpin between the DNA strands. Then UvrB probes one DNA strand for the presence of a lesion. If a lesion is found the UvrA subunits dissociate and the UvrB-DNA preincision complex is formed. This complex is subsequently bound by UvrC and the second UvrB is released. If no lesion is found, the DNA wraps around the other UvrB subunit that will check the other stand for damage. This Streptococcus pyogenes serotype M6 (strain ATCC BAA-946 / MGAS10394) protein is UvrABC system protein B.